A 321-amino-acid chain; its full sequence is Ribose-phosphate pyrophosphokinase 2 (321 aa).

Mg(2+) contacts are provided by aspartate 130, histidine 132, and aspartate 145. Serine 172 is modified (phosphoserine).

This sequence belongs to the ribose-phosphate pyrophosphokinase family.

Its subcellular location is the cytoplasm. It catalyses the reaction D-ribose 5-phosphate + ATP = 5-phospho-alpha-D-ribose 1-diphosphate + AMP + H(+). It participates in metabolic intermediate biosynthesis; 5-phospho-alpha-D-ribose 1-diphosphate biosynthesis; 5-phospho-alpha-D-ribose 1-diphosphate from D-ribose 5-phosphate (route I): step 1/1. In terms of biological role, 5-phosphoribose 1-diphosphate synthase involved in nucleotide, histidine, and tryptophan biosynthesis. Active in heteromultimeric complexes with other 5-phosphoribose 1-diphosphate synthases. This is Ribose-phosphate pyrophosphokinase 2 from Schizosaccharomyces pombe (strain 972 / ATCC 24843) (Fission yeast).